We begin with the raw amino-acid sequence, 199 residues long: MQAITLEAVKRETGKSAARRLKNQGYVPAIMYGKDMTENIPLAVEYTKLQKLLQKYGRNVLLNVVVNGTTHTALIKEIQEDTLKGKIIHVDFQRVSMYEEIEATVPLRFEGIGLIESKGGIVQHQLWELTVESLPDKIPQEIVVDLSHLEIGDTLFVKDIPVPEGVKVLDDPEEIVVSILVPKEAGEEEEEEGEGTAEG.

It belongs to the bacterial ribosomal protein bL25 family. CTC subfamily. In terms of assembly, part of the 50S ribosomal subunit; part of the 5S rRNA/L5/L18/L25 subcomplex. Contacts the 5S rRNA. Binds to the 5S rRNA independently of L5 and L18.

Functionally, this is one of the proteins that binds to the 5S RNA in the ribosome where it forms part of the central protuberance. This chain is Large ribosomal subunit protein bL25, found in Caldanaerobacter subterraneus subsp. tengcongensis (strain DSM 15242 / JCM 11007 / NBRC 100824 / MB4) (Thermoanaerobacter tengcongensis).